A 503-amino-acid chain; its full sequence is Na(+)-translocating NADH-quinone reductase subunit B (503 aa).

5 helical membrane-spanning segments follow: residues Met55 to Leu75, Pro85 to Ser105, Ile120 to Ile142, Ile161 to Ile181, and Phe186 to Phe206. Position 248 is an FMN phosphoryl threonine (Thr248). 5 helical membrane-spanning segments follow: residues Thr361 to Trp381, Phe387 to Gly407, Phe417 to Met437, Trp452 to Tyr472, and Gly475 to Leu495.

This sequence belongs to the NqrB/RnfD family. In terms of assembly, composed of six subunits; NqrA, NqrB, NqrC, NqrD, NqrE and NqrF. FMN is required as a cofactor.

It is found in the cell inner membrane. The enzyme catalyses a ubiquinone + n Na(+)(in) + NADH + H(+) = a ubiquinol + n Na(+)(out) + NAD(+). NQR complex catalyzes the reduction of ubiquinone-1 to ubiquinol by two successive reactions, coupled with the transport of Na(+) ions from the cytoplasm to the periplasm. NqrA to NqrE are probably involved in the second step, the conversion of ubisemiquinone to ubiquinol. The protein is Na(+)-translocating NADH-quinone reductase subunit B of Chlamydia muridarum (strain MoPn / Nigg).